Here is an 82-residue protein sequence, read N- to C-terminus: Acyl carrier protein (82 aa).

The region spanning 3 to 77 (SSIFDKVQNI…QAIEFIQHAI (75 aa)) is the Carrier domain. Position 37 is an O-(pantetheine 4'-phosphoryl)serine (Ser37).

It belongs to the acyl carrier protein (ACP) family. 4'-phosphopantetheine is transferred from CoA to a specific serine of apo-ACP by AcpS. This modification is essential for activity because fatty acids are bound in thioester linkage to the sulfhydryl of the prosthetic group.

The protein localises to the plastid. It is found in the chloroplast. The protein operates within lipid metabolism; fatty acid biosynthesis. Its function is as follows. Carrier of the growing fatty acid chain in fatty acid biosynthesis. This chain is Acyl carrier protein, found in Gracilaria tenuistipitata var. liui (Red alga).